An 88-amino-acid polypeptide reads, in one-letter code: Sec-independent protein translocase protein TatA (88 aa).

A helical membrane pass occupies residues 1 to 21 (MGSLSPWHWAILAVVVIVLFG). Residues 43–52 (MREMQSETKA) show a composition bias toward basic and acidic residues. The disordered stretch occupies residues 43-88 (MREMQSETKAEPSAIETNTANPTPVQSQRIDPAAATGQDQTEARPA). Residues 57 to 71 (IETNTANPTPVQSQR) show a composition bias toward polar residues.

It belongs to the TatA/E family. The Tat system comprises two distinct complexes: a TatABC complex, containing multiple copies of TatA, TatB and TatC subunits, and a separate TatA complex, containing only TatA subunits. Substrates initially bind to the TatABC complex, which probably triggers association of the separate TatA complex to form the active translocon.

Its subcellular location is the cell membrane. Part of the twin-arginine translocation (Tat) system that transports large folded proteins containing a characteristic twin-arginine motif in their signal peptide across membranes. TatA could form the protein-conducting channel of the Tat system. The polypeptide is Sec-independent protein translocase protein TatA (Mycobacterium marinum (strain ATCC BAA-535 / M)).